Here is a 369-residue protein sequence, read N- to C-terminus: UPF0284 protein AM1_5137 (369 aa).

The protein belongs to the UPF0284 family.

The sequence is that of UPF0284 protein AM1_5137 from Acaryochloris marina (strain MBIC 11017).